The primary structure comprises 280 residues: Myelin proteolipid protein B (280 aa).

Residues 1–10 are Cytoplasmic-facing; the sequence is MGWHDGCIRC. 2 S-palmitoyl cysteine lipidation sites follow: Cys7 and Cys10. A helical transmembrane segment spans residues 11–36; it reads MVGVPFASVIATVLCFAGVALFCGCG. Topologically, residues 37–59 are extracellular; that stretch reads HEALSGTEKLIETYFSKNYQEYE. The helical transmembrane segment at 60–88 threads the bilayer; that stretch reads YLIHVINAFQYVIYGIAIFFFLYGILLLA. Over 89–152 the chain is Cytoplasmic; sequence EGFYTTTAIK…LGKWLGHPDK (64 aa). S-palmitoyl cysteine attachment occurs at residues Cys140 and Cys142. A helical transmembrane segment spans residues 153–179; sequence FVGVTYVITILWILIFACSAVPVYIYF. Topologically, residues 180 to 239 are extracellular; sequence NTWVTCQSIAFPGKTTTSVSTLCLDARMYGVLPWNAFPGKVCGTSLLAICKTSEFQMTFH. 2 cysteine pairs are disulfide-bonded: Cys185–Cys229 and Cys202–Cys221. A helical membrane pass occupies residues 240–269; sequence LFIAAFVGAAATLVALLTYMVGASFNYAVL. Over 270-280 the chain is Cytoplasmic; that stretch reads RVTGRSDRSKF.

Belongs to the myelin proteolipid protein family.

Its subcellular location is the cell membrane. In terms of biological role, this is the major myelin protein from the central nervous system. It plays an important role in the formation or maintenance of the multilamellar structure of myelin. The chain is Myelin proteolipid protein B (plp1-b) from Xenopus laevis (African clawed frog).